The primary structure comprises 549 residues: Lipase 1 (549 aa).

The first 15 residues, 1 to 15, serve as a signal peptide directing secretion; the sequence is MELALALSLIASVAA. Cys-75 and Cys-112 form a disulfide bridge. Ser-224 serves as the catalytic Acyl-ester intermediate. Residues Cys-283 and Cys-292 are joined by a disulfide bond. Asn-329 carries an N-linked (GlcNAc...) asparagine glycan. Glu-356 functions as the Charge relay system in the catalytic mechanism. An N-linked (GlcNAc...) asparagine glycan is attached at Asn-366. His-464 acts as the Charge relay system in catalysis.

This sequence belongs to the type-B carboxylesterase/lipase family.

The catalysed reaction is a triacylglycerol + H2O = a diacylglycerol + a fatty acid + H(+). The chain is Lipase 1 (LIP1) from Diutina rugosa (Yeast).